Reading from the N-terminus, the 634-residue chain is Chaperone protein HtpG (634 aa).

The interval 1–342 (MSVETQKETL…SNDLSLNVSR (342 aa)) is a; substrate-binding. Residues 343–559 (EILQKDPVID…EQDLGLQMRQ (217 aa)) form a b region. The tract at residues 560–634 (ILEASGQKVP…LNKLLVELSA (75 aa)) is c.

Belongs to the heat shock protein 90 family. Homodimer.

It localises to the cytoplasm. Its function is as follows. Molecular chaperone. Has ATPase activity. This Pseudomonas paraeruginosa (strain DSM 24068 / PA7) (Pseudomonas aeruginosa (strain PA7)) protein is Chaperone protein HtpG.